Here is a 175-residue protein sequence, read N- to C-terminus: MRLSVAAAISHGRVFRRMGLGPESRIHLLRNLLTGLVRHERIEAPWARVDEMRGYAEKLIDYGKLGDTNERAMRMADFWLTEKDLIPKLFQVLAPRYKDQTGGYTRMLQIPNRSLDRAKMAVIEYKGNCLPPLPLPRRDSHLTLLNQLLQGLRQDLRQSQEASNHSSHTAQTPGI.

The N-terminal 8 residues, 1–8 (MRLSVAAA), are a transit peptide targeting the mitochondrion. The tract at residues 155 to 175 (DLRQSQEASNHSSHTAQTPGI) is disordered. Polar residues predominate over residues 161–175 (EASNHSSHTAQTPGI).

This sequence belongs to the bacterial ribosomal protein bL17 family. Component of the mitochondrial large ribosomal subunit (mt-LSU). Mature mammalian 55S mitochondrial ribosomes consist of a small (28S) and a large (39S) subunit. The 28S small subunit contains a 12S ribosomal RNA (12S mt-rRNA) and 30 different proteins. The 39S large subunit contains a 16S rRNA (16S mt-rRNA), a copy of mitochondrial valine transfer RNA (mt-tRNA(Val)), which plays an integral structural role, and 52 different proteins. As to expression, detected in adrenal gland, mammary gland and adipose tissue.

It is found in the mitochondrion. In Homo sapiens (Human), this protein is Large ribosomal subunit protein bL17m (MRPL17).